The sequence spans 108 residues: uncharacterized protein (108 aa).

Over residues 1–14 (MSDSNSRLVYSTET) the composition is skewed to polar residues. Residues 1–31 (MSDSNSRLVYSTETGRIDEPKAAPVRPKGDG) are disordered. Over residues 15–31 (GRIDEPKAAPVRPKGDG) the composition is skewed to basic and acidic residues.

The protein belongs to the SUI1 family.

This is an uncharacterized protein from Escherichia coli (strain K12).